The chain runs to 103 residues: Large ribosomal subunit protein uL24 (103 aa).

It belongs to the universal ribosomal protein uL24 family. Part of the 50S ribosomal subunit.

Its function is as follows. One of two assembly initiator proteins, it binds directly to the 5'-end of the 23S rRNA, where it nucleates assembly of the 50S subunit. Functionally, one of the proteins that surrounds the polypeptide exit tunnel on the outside of the subunit. This Bacillus licheniformis (strain ATCC 14580 / DSM 13 / JCM 2505 / CCUG 7422 / NBRC 12200 / NCIMB 9375 / NCTC 10341 / NRRL NRS-1264 / Gibson 46) protein is Large ribosomal subunit protein uL24.